Reading from the N-terminus, the 224-residue chain is 7-cyano-7-deazaguanine synthase (224 aa).

ATP is bound at residue 12–22 (LSGGLDSSTVT). C193, C201, C204, and C207 together coordinate Zn(2+).

The protein belongs to the QueC family. Requires Zn(2+) as cofactor.

The enzyme catalyses 7-carboxy-7-deazaguanine + NH4(+) + ATP = 7-cyano-7-deazaguanine + ADP + phosphate + H2O + H(+). It participates in purine metabolism; 7-cyano-7-deazaguanine biosynthesis. Its function is as follows. Catalyzes the ATP-dependent conversion of 7-carboxy-7-deazaguanine (CDG) to 7-cyano-7-deazaguanine (preQ(0)). The sequence is that of 7-cyano-7-deazaguanine synthase from Prochlorococcus marinus (strain MIT 9215).